We begin with the raw amino-acid sequence, 705 residues long: Elongation factor G (705 aa).

Residues 7–287 (HLTRNIGIMA…YVCAFLPSPL (281 aa)) enclose the tr-type G domain. Residues 16–23 (AHIDAGKT), 84–88 (DTPGH), and 138–141 (NKMD) contribute to the GTP site. The tract at residues 291–312 (NVVGTNPDTGAEEDRKPSEDDK) is disordered. Residues 302-312 (EEDRKPSEDDK) are compositionally biased toward basic and acidic residues.

The protein belongs to the TRAFAC class translation factor GTPase superfamily. Classic translation factor GTPase family. EF-G/EF-2 subfamily.

It is found in the cytoplasm. In terms of biological role, catalyzes the GTP-dependent ribosomal translocation step during translation elongation. During this step, the ribosome changes from the pre-translocational (PRE) to the post-translocational (POST) state as the newly formed A-site-bound peptidyl-tRNA and P-site-bound deacylated tRNA move to the P and E sites, respectively. Catalyzes the coordinated movement of the two tRNA molecules, the mRNA and conformational changes in the ribosome. This is Elongation factor G from Bacteroides fragilis (strain ATCC 25285 / DSM 2151 / CCUG 4856 / JCM 11019 / LMG 10263 / NCTC 9343 / Onslow / VPI 2553 / EN-2).